Reading from the N-terminus, the 403-residue chain is Serine/threonine-protein phosphatase 4 regulatory subunit 2-A (403 aa).

3 stretches are compositionally biased toward polar residues: residues 140-149 (EKNNSTSLNR), 156-170 (PSNS…NVNG), and 183-196 (SLSS…LPDS). A disordered region spans residues 140-403 (EKNNSTSLNR…DAPEEPMEQD (264 aa)). Positions 197–211 (TENKESDLQQKEKSQ) are enriched in basic and acidic residues. Polar residues-rich tracts occupy residues 212–226 (SDSA…ATTS) and 371–387 (ATSS…SPME). The segment covering 388–403 (NSEEATDAPEEPMEQD) has biased composition (acidic residues).

This sequence belongs to the PPP4R2 family. In terms of assembly, serine/threonine-protein phosphatase 4 (PP4) occurs in different assemblies of the catalytic and one or more regulatory subunits.

In terms of biological role, regulatory subunit of serine/threonine-protein phosphatase 4 (PP4). This chain is Serine/threonine-protein phosphatase 4 regulatory subunit 2-A (ppp4r2-a), found in Xenopus laevis (African clawed frog).